The sequence spans 684 residues: Galactocerebrosidase (684 aa).

An N-terminal signal peptide occupies residues 1-42 (MANSQPKASQQRQAKVMTAAAGSASRVAVPLLLCALLVPGGA). Substrate is bound by residues T109, W151, and N197. E198 acts as the Proton donor/acceptor in catalysis. The active-site Nucleophile is the E274. C287 and C394 are joined by a disulfide. N-linked (GlcNAc...) asparagine glycans are attached at residues N300 and N379. Residue R396 coordinates substrate. Residues N403, N558, N601, and N645 are each glycosylated (N-linked (GlcNAc...) asparagine).

The protein belongs to the glycosyl hydrolase 59 family. In terms of tissue distribution, detected in brain and kidney.

It localises to the lysosome. It carries out the reaction a beta-D-galactosyl-(1&lt;-&gt;1')-N-acylsphing-4-enine + H2O = an N-acylsphing-4-enine + D-galactose. The catalysed reaction is a D-galactosylceramide + H2O = an N-acyl-sphingoid base + D-galactose. It catalyses the reaction beta-D-galactosyl-(1&lt;-&gt;1)-sphing-4-enine + H2O = sphing-4-enine + D-galactose. In terms of biological role, hydrolyzes the galactose ester bonds of glycolipids such as galactosylceramide and galactosylsphingosine. Enzyme with very low activity responsible for the lysosomal catabolism of galactosylceramide, a major lipid in myelin, kidney and epithelial cells of small intestine and colon. This Mus musculus (Mouse) protein is Galactocerebrosidase.